The chain runs to 143 residues: Cofilin (143 aa).

Residues 5-137 (GVAVADESLT…AYESVLEKVS (133 aa)) enclose the ADF-H domain.

It belongs to the actin-binding proteins ADF family.

Its subcellular location is the cytoplasm. The protein localises to the cytoskeleton. It localises to the nucleus matrix. Its function is as follows. Controls reversibly actin polymerization and depolymerization in a pH-sensitive manner. It has the ability to bind G- and F-actin in a 1:1 ratio of cofilin to actin. Binding to F-actin is regulated by tropomyosin. It is the major component of intranuclear and cytoplasmic actin rods. Required for accumulation of actin at the cell division site via depolymerizing actin at the cell ends. In association with myosin II has a role in the assembly of the contractile ring via severing actin filaments. Involved in the maintenance of the contractile ring once formed. In association with profilin and capping protein, has a role in the mitotic reorganization of the actin cytoskeleton. The polypeptide is Cofilin (COF1) (Eremothecium gossypii (strain ATCC 10895 / CBS 109.51 / FGSC 9923 / NRRL Y-1056) (Yeast)).